The chain runs to 837 residues: Tuftelin-interacting protein 11 (837 aa).

Basic and acidic residues-rich tracts occupy residues 1 to 13 (MSLS…GEGR) and 53 to 64 (VWAERDSDDERP). Disordered stretches follow at residues 1-21 (MSLS…DDER), 53-72 (VWAE…KRAR), and 85-133 (LKKG…KGFA). The interval 1 to 50 (MSLSHLYRDGEGRIDDDDDERENFEITDWDLQNEFNPNRQRHWQTKEEAT) is required for interaction with DHX15. Phosphoserine occurs at positions 2, 59, and 98. Acidic residues predominate over residues 91-102 (EEAELEDSDDEE). The span at 103–116 (KPVKQDDFPKDFGP) shows a compositional bias: basic and acidic residues. Ser-144 bears the Phosphoserine mark. Residues 149–195 (TKGIGQKLLQKMGYVPGRGLGKNAQGIINPIEAKQRKGKGAVGAYGS) enclose the G-patch domain. Residues 179–236 (IEAKQRKGKGAVGAYGSERTTQSMQDFPVVDSEEEAEEEFQKELSQWRKDPSGSKKKP) are disordered. A Phosphoserine modification is found at Ser-210. Residues 217-231 (EFQKELSQWRKDPSG) show a composition bias toward basic and acidic residues. The Nuclear localization signal signature appears at 700-705 (VKDKFN). The tract at residues 710–734 (IMNRAVSSNVGAYMQPGARENIAYL) is required for nuclear speckle localization.

The protein belongs to the TFP11/STIP family. As to quaternary structure, identified in the spliceosome C complex. Found in the Intron Large (IL) complex, a post-mRNA release spliceosomal complex containing the excised intron, U2, U5 and U6 snRNPs, and splicing factors. Interacts with TUFT1. Interacts with DHX15; indicative for a recruitment of DHX15 to the IL complex. Interacts with GCFC2.

The protein localises to the cytoplasm. The protein resides in the nucleus. Its function is as follows. Involved in pre-mRNA splicing, specifically in spliceosome disassembly during late-stage splicing events. Intron turnover seems to proceed through reactions in two lariat-intron associated complexes termed Intron Large (IL) and Intron Small (IS). In cooperation with DHX15 seems to mediate the transition of the U2, U5 and U6 snRNP-containing IL complex to the snRNP-free IS complex leading to efficient debranching and turnover of excised introns. May play a role in the differentiation of ameloblasts and odontoblasts or in the forming of the enamel extracellular matrix. This Pan troglodytes (Chimpanzee) protein is Tuftelin-interacting protein 11 (TFIP11).